We begin with the raw amino-acid sequence, 995 residues long: tRNA wybutosine-synthesizing protein 2/3/4 (995 aa).

Residues 1–212 (MDFEKRKAAT…GFSVALASNG (212 aa)) form a tRNA wybutosine-synthesizing protein 3 homolog region. 5 Kelch repeats span residues 284–335 (EVIV…MVGD), 336–386 (FMFV…SVGT), 387–436 (KVYI…AYGS), 437–486 (QSFM…VYKH), and 488–535 (IGII…SILG). Residues 661 to 995 (ERSEENNLTK…RHLVADVRCR (335 aa)) are tRNA wybutosine-synthesizing protein 2 homolog. Residues Lys828 and 896–897 (DN) contribute to the S-adenosyl-L-methionine site.

This sequence in the C-terminal section; belongs to the class I-like SAM-binding methyltransferase superfamily. TRM5/TYW2 family. It in the N-terminal section; belongs to the TYW3 family.

It catalyses the reaction 4-demethyl-7-[(3S)-3-amino-3-carboxypropyl]wyosine(37) in tRNA(Phe) + S-adenosyl-L-methionine = 7-[(3S)-3-amino-3-carboxypropyl]wyosine(37) in tRNA(Phe) + S-adenosyl-L-homocysteine + H(+). The catalysed reaction is 4-demethylwyosine(37) in tRNA(Phe) + S-adenosyl-L-methionine = 4-demethyl-7-[(3S)-3-amino-3-carboxypropyl]wyosine(37) in tRNA(Phe) + S-methyl-5'-thioadenosine + H(+). It functions in the pathway tRNA modification; wybutosine-tRNA(Phe) biosynthesis. Its function is as follows. S-adenosyl-L-methionine-dependent transferase that acts as a component of the wybutosine biosynthesis pathway. Wybutosine is a hyper modified guanosine with a tricyclic base found at the 3'-position adjacent to the anticodon of eukaryotic phenylalanine tRNA. This Arabidopsis thaliana (Mouse-ear cress) protein is tRNA wybutosine-synthesizing protein 2/3/4.